The following is a 251-amino-acid chain: uncharacterized protein (251 aa).

2 disordered regions span residues 1-92 (MGRP…PGSA) and 137-251 (KPTP…LRTH). Residues 69–92 (AEGAPALLGGSPSSGSPGHPPGSA) show a composition bias toward low complexity. Positions 155-172 (SESSWQLPQLPAGSTSGS) are enriched in polar residues.

This is an uncharacterized protein from Homo sapiens (Human).